A 450-amino-acid polypeptide reads, in one-letter code: FAD-dependent monooxygenase okaB (450 aa).

A helical membrane pass occupies residues 14–34 (IVIIIVGLGIAGLSAAIECHG). FAD contacts are provided by E43 and R116. The active site involves R194. Residues D318 and G331 each coordinate FAD.

This sequence belongs to the paxM FAD-dependent monooxygenase family.

It is found in the membrane. The catalysed reaction is cyclo(N(8)-(alpha,alpha-dimethylallyl)-L-Trp-6a-(alpha,alpha-dimethylallyl)-L-Trp) + AH2 + O2 = okaramine C + A + H2O. The protein operates within alkaloid biosynthesis. Its function is as follows. FAD-dependent monooxygenase; part of the gene cluster that mediates the biosynthesis of okaramine B, a prenylated indole alkaloid that possesses an unusual octacyclic ring system, including a four-membered azetidine ring and an eight-membered azocine ring, and that exhibits insecticidal activity against silkworm larvae. Within the pathway, okaC performs indole 2,3-epoxidation, facilitating the formation of the hexahydropyrrolo[2,3-b]indole (HPI) moiety of okaramine C. okaC then performs asymmetric reverse prenylation of cyclo(L-Trp-L-Trp) at N-1 and C-2' of the indole ring to produce the cyclic prenylated tryptophan dimer cyclo(N8-(alpha,alpha-dimethylallyl)-L-Trp-6a-(alpha,alpha-dime-thylallyl)-L-Trp). The biosynthesis begins with the NRPS okaA that condenses two tryptophan molecules into cyclo(L-Trp-L-Trp). Prenylation by the prenyltransferase okaC then leads to the formation of cyclo(N8-(alpha,alpha-dimethylallyl)-L-Trp-6a-(alpha,alpha-dime-thylallyl)-L-Trp). This is followed by indole 2,3-epoxidation by the FAD-dependent monooxygenase okaB to facilitate the formation of the hexahydropyrrolo[2,3-b]indole (HPI) moiety of okaramine C. The cytochrome P450 monooxygenase okaD then likely catalyzes formation of the eight-membered ring of okaramine A. The dioxygenase okaE further forms the unusual 2-dimethyl-3-methyl-azetidine ring to yield 12-deshydroxyl okaramine E, as well as the hydroxylation of 12-deshydroxyl okaramine E to produce okaramine E. The cytochrome P450 monoxygenase okaG converts 12-deshydroxyl okaramine E into 3-desmethyl okaramine B which is further methylated by the methyltransferase okaF into okaramine B. In a shunt pathway, okaG and okaF together are also able to convert okaramine E into okaramine D. Okaramine H is produced by nonenzymatic conversion from okaramine A. The polypeptide is FAD-dependent monooxygenase okaB (Penicillium ochrochloron).